The sequence spans 213 residues: Protein-L-isoaspartate O-methyltransferase (213 aa).

Serine 64 is an active-site residue.

This sequence belongs to the methyltransferase superfamily. L-isoaspartyl/D-aspartyl protein methyltransferase family.

It is found in the cytoplasm. The catalysed reaction is [protein]-L-isoaspartate + S-adenosyl-L-methionine = [protein]-L-isoaspartate alpha-methyl ester + S-adenosyl-L-homocysteine. Catalyzes the methyl esterification of L-isoaspartyl residues in peptides and proteins that result from spontaneous decomposition of normal L-aspartyl and L-asparaginyl residues. It plays a role in the repair and/or degradation of damaged proteins. The protein is Protein-L-isoaspartate O-methyltransferase of Flavobacterium psychrophilum (strain ATCC 49511 / DSM 21280 / CIP 103535 / JIP02/86).